The chain runs to 362 residues: 3-dehydroquinate synthase (362 aa).

NAD(+) contacts are provided by residues 71 to 76 (DGEQYK), 105 to 109 (GVVGD), 129 to 130 (TT), K142, K151, and 169 to 172 (CLKT). The Zn(2+) site is built by E184, H247, and H264.

The protein belongs to the sugar phosphate cyclases superfamily. Dehydroquinate synthase family. Co(2+) is required as a cofactor. Requires Zn(2+) as cofactor. NAD(+) serves as cofactor.

The protein resides in the cytoplasm. It carries out the reaction 7-phospho-2-dehydro-3-deoxy-D-arabino-heptonate = 3-dehydroquinate + phosphate. It functions in the pathway metabolic intermediate biosynthesis; chorismate biosynthesis; chorismate from D-erythrose 4-phosphate and phosphoenolpyruvate: step 2/7. In terms of biological role, catalyzes the conversion of 3-deoxy-D-arabino-heptulosonate 7-phosphate (DAHP) to dehydroquinate (DHQ). The chain is 3-dehydroquinate synthase from Shigella flexneri serotype 5b (strain 8401).